Here is a 168-residue protein sequence, read N- to C-terminus: Scytalone dehydratase arp1 (168 aa).

Tyrosine 29 and tyrosine 49 together coordinate substrate. Catalysis depends on residues histidine 84 and histidine 109. Asparagine 130 contacts substrate.

This sequence belongs to the scytalone dehydratase family. Homotrimer. Each subunit contains an active site, located in the central part of the hydrophobic core of the monomer, which functions independently.

The protein localises to the endosome. It catalyses the reaction scytalone = 1,3,8-trihydroxynaphthalene + H2O. The protein operates within pigment biosynthesis; melanin biosynthesis. Fenoxanil inhibits arp1 scytalone dehydratase activity. In terms of biological role, scytalone dehydratase; part of the gene cluster that mediates the biosynthesis of dihydroxynaphthalene (DHN)-melanin, a bluish-green pigment and a structural component of the conidial wall. The first step of the pathway is the production of the heptaketide naphtopyrone YWA1 by the polyketide synthase alb1 though condensation of acetyl-CoA with malonyl-CoA. The naphtopyrone YWA1 is then converted to the pentaketide 1,3,6,8-tetrahydroxynaphthalene (1,3,6,8-THN) by the heptaketide hydrolyase ayg1 though chain-length shortening. 1,3,6,8-THN is substrate of the hydroxynaphthalene reductase arp2 to yield scytalone. The scytalone dehydratase arp1 then reduces scytalone to 1,3,8-THN. 1,3,8-THN is also substrate of the hydroxynaphthalene reductase arp2 to yield vermelone. Vermelone is further converted by the multicopper oxidase abr1 to 1,8-DHN. Finally the laccase abr2 transforms 1,8-DHN to DHN-melanin. DHN-melanin biosynthesis appears to be initiated in endosomes where early enzymes (abl1, ayg1, arp1 and arp2) localize, with exocytosis leading to melanin deposition on the cell surface where late enzymes (abr1 and abr2) localize. DHN-melanin is an important structural component of the outer cell wall and is required for the presence of conidial surface hydrophobins. DHN-melanin also plays a crucial role in fungal virulence, including a protective role against the host's immune defenses. DHN-melanin also protects conidia against amoeba predation. The chain is Scytalone dehydratase arp1 from Aspergillus fumigatus (strain ATCC MYA-4609 / CBS 101355 / FGSC A1100 / Af293) (Neosartorya fumigata).